We begin with the raw amino-acid sequence, 286 residues long: Energy-coupling factor transporter ATP-binding protein EcfA2 (286 aa).

Residues 3 to 245 (IKIENLTYTY…IDTLEKVGLA (243 aa)) form the ABC transporter domain. 40–47 (GHTGSGKS) serves as a coordination point for ATP.

The protein belongs to the ABC transporter superfamily. Energy-coupling factor EcfA family. Forms a stable energy-coupling factor (ECF) transporter complex composed of 2 membrane-embedded substrate-binding proteins (S component), 2 ATP-binding proteins (A component) and 2 transmembrane proteins (T component).

It is found in the cell membrane. ATP-binding (A) component of a common energy-coupling factor (ECF) ABC-transporter complex. Unlike classic ABC transporters this ECF transporter provides the energy necessary to transport a number of different substrates. This Clostridium acetobutylicum (strain ATCC 824 / DSM 792 / JCM 1419 / IAM 19013 / LMG 5710 / NBRC 13948 / NRRL B-527 / VKM B-1787 / 2291 / W) protein is Energy-coupling factor transporter ATP-binding protein EcfA2.